Reading from the N-terminus, the 201-residue chain is Prostamide/prostaglandin F synthase (201 aa).

Belongs to the peroxiredoxin-like PRXL2 family. Prostamide/prostaglandin F synthase subfamily.

It is found in the cytoplasm. Its subcellular location is the cytosol. The enzyme catalyses prostaglandin H2 + [thioredoxin]-dithiol = prostaglandin F2alpha + [thioredoxin]-disulfide. The catalysed reaction is prostamide F2alpha + [thioredoxin]-disulfide = prostamide H2 + [thioredoxin]-dithiol. In terms of biological role, catalyzes the reduction of prostaglandin-ethanolamide H(2) (prostamide H(2)) to prostamide F(2alpha) with NADPH as proton donor. Also able to reduce prostaglandin H(2) to prostaglandin F(2alpha). This Aquarana catesbeiana (American bullfrog) protein is Prostamide/prostaglandin F synthase (prxl2b).